A 207-amino-acid polypeptide reads, in one-letter code: Outer-membrane lipoprotein LolB (207 aa).

The signal sequence occupies residues 1–21 (MPLPDFRLIRLLPLASLVLTA). Residue cysteine 22 is the site of N-palmitoyl cysteine attachment. Cysteine 22 is lipidated: S-diacylglycerol cysteine.

It belongs to the LolB family. Monomer.

The protein resides in the cell outer membrane. Functionally, plays a critical role in the incorporation of lipoproteins in the outer membrane after they are released by the LolA protein. The polypeptide is Outer-membrane lipoprotein LolB (Escherichia fergusonii (strain ATCC 35469 / DSM 13698 / CCUG 18766 / IAM 14443 / JCM 21226 / LMG 7866 / NBRC 102419 / NCTC 12128 / CDC 0568-73)).